A 759-amino-acid chain; its full sequence is DNA topoisomerase 3 (759 aa).

Residues arginine 3–serine 147 enclose the Toprim domain. The region spanning aspartate 165–phenylalanine 590 is the Topo IA-type catalytic domain. Tyrosine 334 (O-(5'-phospho-DNA)-tyrosine intermediate) is an active-site residue. The tract at residues aspartate 609–phenylalanine 715 is disordered. Residues alanine 614–proline 639 show a composition bias toward gly residues. A compositionally biased stretch (pro residues) spans threonine 640–proline 649. The Zn(2+) site is built by cysteine 716, cysteine 718, cysteine 743, and cysteine 753. The GRF-type zinc-finger motif lies at cysteine 716–alanine 759.

The protein belongs to the type IA topoisomerase family. In terms of assembly, component of the BTR double Holliday Junction dissolution complex composed of at least him-6, top-3, rmh-1 and rmif-2, which is involved in double strand break repair in the germline. May interact with rmh-1.

It is found in the nucleus. It catalyses the reaction ATP-independent breakage of single-stranded DNA, followed by passage and rejoining.. Functionally, component of the BTR double Holliday Junction dissolution complex, which is involved in homologous recombination during meiotic double strand break in the germline. Releases the supercoiling and torsional tension of DNA introduced during the DNA replication and transcription by transiently cleaving and rejoining one strand of the DNA duplex. Introduces a single-strand break via transesterification at a target site in duplex DNA. The scissile phosphodiester is attacked by the catalytic tyrosine of the enzyme, resulting in the formation of a DNA-(5'-phosphotyrosyl)-enzyme intermediate and the expulsion of a 3'-OH DNA strand. The free DNA strand than undergoes passage around the unbroken strand thus removing DNA supercoils. Finally, in the religation step, the DNA 3'-OH attacks the covalent intermediate to expel the active-site tyrosine and restore the DNA phosphodiester backbone. This Caenorhabditis elegans protein is DNA topoisomerase 3.